A 193-amino-acid polypeptide reads, in one-letter code: Erythropoietin (193 aa).

Residues 1–27 (MGVHECPAWLWLLLSLLSLPLGLPVLG) form the signal peptide. Cystine bridges form between Cys34–Cys188 and Cys56–Cys60. Residue Asn51 is glycosylated (N-linked (GlcNAc...) asparagine). N-linked (GlcNAc...) asparagine glycans are attached at residues Asn65 and Asn110. O-linked (GalNAc...) serine glycosylation is present at Ser153.

The protein belongs to the EPO/TPO family. As to expression, produced by kidney or liver of adult mammals and by liver of fetal or neonatal mammals.

It localises to the secreted. Functionally, hormone involved in the regulation of erythrocyte proliferation and differentiation and the maintenance of a physiological level of circulating erythrocyte mass. Binds to EPOR leading to EPOR dimerization and JAK2 activation thereby activating specific downstream effectors, including STAT1 and STAT3. The polypeptide is Erythropoietin (EPO) (Homo sapiens (Human)).